Reading from the N-terminus, the 35-residue chain is Conotoxin Cal6.1f (35 aa).

The propeptide occupies glycine 1–arginine 8. 3 disulfide bridges follow: cysteine 9–cysteine 25, cysteine 16–cysteine 29, and cysteine 24–cysteine 34.

It belongs to the conotoxin O1 superfamily. Expressed by the venom duct.

Its subcellular location is the secreted. In terms of biological role, probable neurotoxin with unknown target. Possibly targets ion channels. This chain is Conotoxin Cal6.1f, found in Californiconus californicus (California cone).